A 601-amino-acid chain; its full sequence is Casbene synthase, chloroplastic (601 aa).

The N-terminal 56 residues, 1–56 (MALPSAAMQSNPEKLNLFHRLSSLPTTSLEYGNNRFPFFSSSAKSHFKKPTQACLS), are a transit peptide targeting the chloroplast. Mg(2+)-binding residues include Asp355, Asp359, Asn499, Ser503, and Glu507. Positions 355–359 (DDTID) match the DDXXD motif motif.

The protein belongs to the terpene synthase family. Mg(2+) serves as cofactor.

Its subcellular location is the plastid. The protein localises to the chloroplast. It catalyses the reaction (2E,6E,10E)-geranylgeranyl diphosphate = casbene + diphosphate. Catalyzes the cyclization of geranylgeranyl diphosphate to casbene, a diterpene phytoalexin with antibacterial and antifungal activity. This chain is Casbene synthase, chloroplastic, found in Ricinus communis (Castor bean).